Consider the following 336-residue polypeptide: Anthranilate phosphoribosyltransferase (336 aa).

5-phospho-alpha-D-ribose 1-diphosphate is bound by residues Gly79, 82-83 (GD), Thr87, 89-92 (NIST), 107-115 (KHGNRCVSS), and Ala119. Anthranilate is bound at residue Gly79. Ser91 serves as a coordination point for Mg(2+). Residue Asn110 participates in anthranilate binding. Arg165 contributes to the anthranilate binding site. Mg(2+)-binding residues include Asp224 and Glu225.

Belongs to the anthranilate phosphoribosyltransferase family. Homodimer. The cofactor is Mg(2+).

It catalyses the reaction N-(5-phospho-beta-D-ribosyl)anthranilate + diphosphate = 5-phospho-alpha-D-ribose 1-diphosphate + anthranilate. The protein operates within amino-acid biosynthesis; L-tryptophan biosynthesis; L-tryptophan from chorismate: step 2/5. Functionally, catalyzes the transfer of the phosphoribosyl group of 5-phosphorylribose-1-pyrophosphate (PRPP) to anthranilate to yield N-(5'-phosphoribosyl)-anthranilate (PRA). This Lachnoclostridium phytofermentans (strain ATCC 700394 / DSM 18823 / ISDg) (Clostridium phytofermentans) protein is Anthranilate phosphoribosyltransferase.